The following is a 196-amino-acid chain: ATP-dependent Clp protease proteolytic subunit (196 aa).

The active-site Nucleophile is the serine 99. Histidine 124 is a catalytic residue.

The protein belongs to the peptidase S14 family. Fourteen ClpP subunits assemble into 2 heptameric rings which stack back to back to give a disk-like structure with a central cavity, resembling the structure of eukaryotic proteasomes.

It localises to the cytoplasm. It catalyses the reaction Hydrolysis of proteins to small peptides in the presence of ATP and magnesium. alpha-casein is the usual test substrate. In the absence of ATP, only oligopeptides shorter than five residues are hydrolyzed (such as succinyl-Leu-Tyr-|-NHMec, and Leu-Tyr-Leu-|-Tyr-Trp, in which cleavage of the -Tyr-|-Leu- and -Tyr-|-Trp bonds also occurs).. Cleaves peptides in various proteins in a process that requires ATP hydrolysis. Has a chymotrypsin-like activity. Plays a major role in the degradation of misfolded proteins. The sequence is that of ATP-dependent Clp protease proteolytic subunit from Campylobacter lari (strain RM2100 / D67 / ATCC BAA-1060).